The following is a 525-amino-acid chain: Bifunctional purine biosynthesis protein PurH (525 aa).

The 148-residue stretch at 1-148 (MPSNNLIKNA…KNYKNVIVIV (148 aa)) folds into the MGS-like domain.

This sequence belongs to the PurH family.

It catalyses the reaction (6R)-10-formyltetrahydrofolate + 5-amino-1-(5-phospho-beta-D-ribosyl)imidazole-4-carboxamide = 5-formamido-1-(5-phospho-D-ribosyl)imidazole-4-carboxamide + (6S)-5,6,7,8-tetrahydrofolate. It carries out the reaction IMP + H2O = 5-formamido-1-(5-phospho-D-ribosyl)imidazole-4-carboxamide. It functions in the pathway purine metabolism; IMP biosynthesis via de novo pathway; 5-formamido-1-(5-phospho-D-ribosyl)imidazole-4-carboxamide from 5-amino-1-(5-phospho-D-ribosyl)imidazole-4-carboxamide (10-formyl THF route): step 1/1. The protein operates within purine metabolism; IMP biosynthesis via de novo pathway; IMP from 5-formamido-1-(5-phospho-D-ribosyl)imidazole-4-carboxamide: step 1/1. The sequence is that of Bifunctional purine biosynthesis protein PurH from Buchnera aphidicola subsp. Acyrthosiphon pisum (strain 5A).